Here is a 603-residue protein sequence, read N- to C-terminus: MTMHTTMTTLTLTSLIPPILTTLVNPNKKNSYPHYVKSIVASTFIISLFPTTMFMCLDQEVIISNWHWATTQTTQLSLSFKLDYFSMMFIPVALFVTWSIMEFSLWYMNSDPNINQFFKYLLIFLITMLILVTANNLFQLFIGWEGVGIMSFLLISWWYARADANTAAIQAILYNRIGDIGFILALAWFILHSNSWDPQQMALLNANPSLTPLLGLLLAAAGKSAQLGLHPWLPSAMEGPTPVSALLHSSTMVVAGIFLLIRFHPLAENSPLIQTLTLCLGAITTLFAAVCALTQNDIKKIVAFSTSSQLGLMMVTIGINQPHLAFLHICTHAFFKAMLFMCSGSIIHNLNNEQDIRKMGGLLKTMPLTSTSLTIGSLALAGMPFLTGFYSKDHIIETANMSYTNAWALSITLIATSLTSAYSTRMILLTLTGQPRFPTLTNINENNPTLLNPIKRLAAGSLFAGFLITNNISPASPFQTTIPLYLKLTALAVTFLGLLTALDLNYLTNKLKMKSPLCTFYFSNMLGFYPSITHRTIPYLGLLTSQNLPLLLLDLTWLEKLLPKTISQHQISTSIITSTQKGMIKLYFLSFFFPLILTLLLIT.

The next 15 membrane-spanning stretches (helical) occupy residues 38–58 (SIVA…MCLD), 87–107 (MMFI…SLWY), 122–142 (LIFL…QLFI), 144–160 (WEGV…WWYA), 171–191 (AILY…WFIL), 211–233 (TPLL…HPWL), 241–261 (TPVS…FLLI), 272–292 (LIQT…AVCA), 301–320 (IVAF…IGIN), 325–347 (AFLH…GSII), 370–390 (STSL…TGFY), 407–429 (WALS…MILL), 458–478 (AAGS…ASPF), 482–502 (IPLY…LTAL), and 582–602 (GMIK…LLLI).

It belongs to the complex I subunit 5 family. As to quaternary structure, core subunit of respiratory chain NADH dehydrogenase (Complex I) which is composed of 45 different subunits.

It is found in the mitochondrion inner membrane. The catalysed reaction is a ubiquinone + NADH + 5 H(+)(in) = a ubiquinol + NAD(+) + 4 H(+)(out). Core subunit of the mitochondrial membrane respiratory chain NADH dehydrogenase (Complex I) which catalyzes electron transfer from NADH through the respiratory chain, using ubiquinone as an electron acceptor. Essential for the catalytic activity and assembly of complex I. This chain is NADH-ubiquinone oxidoreductase chain 5 (MT-ND5), found in Homo sapiens (Human).